A 617-amino-acid chain; its full sequence is uncharacterized protein (617 aa).

The B12-binding N-terminal domain maps to 33–134 (TEDDFRGEKF…FXNATKQKGS (102 aa)). Residues Glu84, 146 to 150 (GDVHD), His149, Ser194, Thr198, and Ala251 contribute to the methylcob(III)alamin site. The B12-binding domain occupies 136-272 (NGKVVIATVK…NPEGRAALWE (137 aa)). In terms of domain architecture, AdoMet activation spans 288–617 (SKPLRKQLSI…MMKWLGVAMK (330 aa)). Residues Asp337, Arg528, and 583 to 584 (YF) each bind S-adenosyl-L-methionine.

It belongs to the vitamin-B12 dependent methionine synthase family.

This is an uncharacterized protein from Haemophilus influenzae (strain ATCC 51907 / DSM 11121 / KW20 / Rd).